Consider the following 180-residue polypeptide: Type-1 fimbrial protein, C chain (180 aa).

A signal peptide spans 1-23 (MKLKFISMAVFSALTLGVATNAS). An intrachain disulfide couples Cys-44 to Cys-84.

It belongs to the fimbrial protein family.

It is found in the fimbrium. Functionally, fimbriae (also called pili), polar filaments radiating from the surface of the bacterium to a length of 0.5-1.5 micrometers and numbering 100-300 per cell, enable bacteria to colonize the epithelium of specific host organs. In Escherichia coli O6:H1 (strain CFT073 / ATCC 700928 / UPEC), this protein is Type-1 fimbrial protein, C chain (pilC).